A 421-amino-acid chain; its full sequence is Phosphatidate cytidylyltransferase 1 (421 aa).

Methionine 1 bears the N-acetylmethionine mark. Over residues 1–12 (MEEENVTSSPST) the composition is skewed to polar residues. The tract at residues 1–26 (MEEENVTSSPSTPVHRLRHRRRSNEV) is disordered. A run of 8 helical transmembrane segments spans residues 60–80 (IGGFVLVVYMGHLYITAMVVV), 102–122 (LPYIKQLNWHFFFTAMLFVYG), 149–169 (YHMAICYLLYIIGFMWFILTL), 183–203 (WTHMILIVVFTQSSFTVANIF), 206–226 (IFWFLLPASLIIINDIFAYIF), 246–266 (GFIGASVTTIISAFVLANILG), 321–341 (LCLGLFASIIAPFGGFFASGF), and 369–389 (VMAVFAYIYLQSFIVSQSVSV).

It belongs to the CDS family. Requires Mg(2+) as cofactor.

Its subcellular location is the membrane. It catalyses the reaction a 1,2-diacyl-sn-glycero-3-phosphate + CTP + H(+) = a CDP-1,2-diacyl-sn-glycerol + diphosphate. Its pathway is phospholipid metabolism; CDP-diacylglycerol biosynthesis; CDP-diacylglycerol from sn-glycerol 3-phosphate: step 3/3. May be involved in the synthesis of minor phospholipids and in modulation of IP3-mediated signal transduction. This chain is Phosphatidate cytidylyltransferase 1, found in Arabidopsis thaliana (Mouse-ear cress).